We begin with the raw amino-acid sequence, 168 residues long: G/U mismatch-specific DNA glycosylase (168 aa).

Belongs to the uracil-DNA glycosylase (UDG) superfamily. TDG/mug family. In terms of assembly, binds DNA as a monomer.

It localises to the cytoplasm. The enzyme catalyses Specifically hydrolyzes mismatched double-stranded DNA and polynucleotides, releasing free uracil.. Functionally, excises ethenocytosine and uracil, which can arise by alkylation or deamination of cytosine, respectively, from the corresponding mispairs with guanine in ds-DNA. It is capable of hydrolyzing the carbon-nitrogen bond between the sugar-phosphate backbone of the DNA and the mispaired base. The complementary strand guanine functions in substrate recognition. Required for DNA damage lesion repair in stationary-phase cells. This is G/U mismatch-specific DNA glycosylase from Klebsiella pneumoniae subsp. pneumoniae (strain ATCC 700721 / MGH 78578).